The sequence spans 447 residues: MSASATNGTHYEQLHQGRTKMYKSKVDVVLGAQWGDEGKGKVVDMLASDVDIVCRCQGGNNAGHTVVANGTEFDFHLLPSGVVNEKCVSVIGNGVVIHLPSLFDEVLKNEAKGLQHLENRLIISDRAHLVFDFHQHVDGMQEAEKGGKSLGTTKKGIGPAYSSKATRNGIRVGELLGDFNLFSEKFKSIVATHVRLFPSINVDVEAELARYKDYADKVRPYVKDTICFLHTALRNGKTILVEGANAAMLDIDFGTYPYVTSSNCSIGGVLTGLGLPPQTIGEVIGVVKAYTTRVGDGPFPTEQLNDIGDLLQTRGFEVGVTTKRKRRCGWLDIPLLKYTSLVNGYTCICLTKLDILDTLPEIKVAVAYKKPNGEKLDHFPGTIAELGNIEVEYAVLPGWQTSTEEVRNFKELPENAQSYVRLLESELSVPVRWVGVGKGRESIINVH.

GTP is bound by residues 35 to 41 (GDEGKGK) and 63 to 65 (GHT). The active-site Proton acceptor is Asp36. Asp36 and Gly63 together coordinate Mg(2+). Residues 36 to 39 (DEGK), 61 to 64 (NAGH), Thr153, Arg167, Asn245, Thr260, and Arg324 contribute to the IMP site. The active-site Proton donor is His64. 320-326 (VTTKRKR) is a binding site for substrate. GTP-binding positions include Arg326, 352 to 354 (KLD), and 435 to 437 (GVG).

It belongs to the adenylosuccinate synthetase family. Homodimer. Mg(2+) is required as a cofactor.

The protein localises to the cytoplasm. It carries out the reaction IMP + L-aspartate + GTP = N(6)-(1,2-dicarboxyethyl)-AMP + GDP + phosphate + 2 H(+). It participates in purine metabolism; AMP biosynthesis via de novo pathway; AMP from IMP: step 1/2. Its function is as follows. Plays an important role in the de novo pathway and in the salvage pathway of purine nucleotide biosynthesis. Catalyzes the first committed step in the biosynthesis of AMP from IMP. Plays a role in the regulation of adult life span. The protein is Adenylosuccinate synthetase of Drosophila melanogaster (Fruit fly).